Consider the following 593-residue polypeptide: Aspartate--tRNA(Asp/Asn) ligase (593 aa).

E176 contributes to the L-aspartate binding site. The segment at 200 to 203 (QIFK) is aspartate. R222 is a binding site for L-aspartate. ATP contacts are provided by residues 222–224 (RDE) and Q231. H450 is a binding site for L-aspartate. An ATP-binding site is contributed by E490. R497 is an L-aspartate binding site. Residue 542-545 (GLDR) participates in ATP binding.

Belongs to the class-II aminoacyl-tRNA synthetase family. Type 1 subfamily. In terms of assembly, homodimer.

Its subcellular location is the cytoplasm. It catalyses the reaction tRNA(Asx) + L-aspartate + ATP = L-aspartyl-tRNA(Asx) + AMP + diphosphate. Its function is as follows. Aspartyl-tRNA synthetase with relaxed tRNA specificity since it is able to aspartylate not only its cognate tRNA(Asp) but also tRNA(Asn). Reaction proceeds in two steps: L-aspartate is first activated by ATP to form Asp-AMP and then transferred to the acceptor end of tRNA(Asp/Asn). The chain is Aspartate--tRNA(Asp/Asn) ligase from Symbiobacterium thermophilum (strain DSM 24528 / JCM 14929 / IAM 14863 / T).